A 338-amino-acid chain; its full sequence is Formamidase (338 aa).

Residues 15-257 (VVIGLAQLAL…DEIVCCELRP (243 aa)) enclose the CN hydrolase domain. Glu61 acts as the Proton acceptor in catalysis. The active-site Proton donor is the Lys130. Cys163 serves as the catalytic Nucleophile.

It belongs to the carbon-nitrogen hydrolase superfamily. Aliphatic amidase family.

The catalysed reaction is formamide + H2O = formate + NH4(+). In terms of biological role, is an aliphatic amidase with a restricted substrate specificity, as it only hydrolyzes formamide. This chain is Formamidase, found in Pseudomonas syringae pv. tomato (strain ATCC BAA-871 / DC3000).